An 862-amino-acid polypeptide reads, in one-letter code: Probable alpha,alpha-trehalose-phosphate synthase [UDP-forming] 11 (862 aa).

Phosphoserine is present on Ser-5. The tract at residues 50–538 (PKRIVVSNQL…ARSYDQDLQR (489 aa)) is glycosyltransferase. Positions 838–862 (SKHEQQKKQSKFTFQQPMGQCRKKA) are disordered.

This sequence in the N-terminal section; belongs to the glycosyltransferase 20 family. In the C-terminal section; belongs to the trehalose phosphatase family. In terms of tissue distribution, expressed in leaves, roots, stems and flowers.

It catalyses the reaction D-glucose 6-phosphate + UDP-alpha-D-glucose = alpha,alpha-trehalose 6-phosphate + UDP + H(+). This is Probable alpha,alpha-trehalose-phosphate synthase [UDP-forming] 11 (TPS11) from Arabidopsis thaliana (Mouse-ear cress).